Here is a 217-residue protein sequence, read N- to C-terminus: Small ribosomal subunit protein uS3 (217 aa).

In terms of domain architecture, KH type-2 spans 40-110; it reads IRELVNKSFT…EVYINIHEVR (71 aa).

The protein belongs to the universal ribosomal protein uS3 family. As to quaternary structure, part of the 30S ribosomal subunit. Forms a tight complex with proteins S10 and S14.

Binds the lower part of the 30S subunit head. Binds mRNA in the 70S ribosome, positioning it for translation. The sequence is that of Small ribosomal subunit protein uS3 from Rickettsia bellii (strain OSU 85-389).